A 95-amino-acid chain; its full sequence is Large ribosomal subunit protein bL25 (95 aa).

Belongs to the bacterial ribosomal protein bL25 family. Part of the 50S ribosomal subunit; part of the 5S rRNA/L5/L18/L25 subcomplex. Contacts the 5S rRNA. Binds to the 5S rRNA independently of L5 and L18.

In terms of biological role, this is one of the proteins that binds to the 5S RNA in the ribosome where it forms part of the central protuberance. This chain is Large ribosomal subunit protein bL25, found in Yersinia enterocolitica serotype O:8 / biotype 1B (strain NCTC 13174 / 8081).